A 645-amino-acid polypeptide reads, in one-letter code: MDGTVTLSPAPTDLPPVSSLDAGQPTLPPEAPLAMPEQSLREGSLQVRHQRTSPMGIGLRRFYLIGGTLTATAVAVWVMLSVLWPGGFSVLEGCLLGLFVLLFAWIAMSFASAVAGFITVVARAGRKLGIDPDAPLPSLHTRTALLMPTYNEDPRRLLAGLQAIYESVAETGQLEHFDFFVLSDTTREHIGRAEEQVYAELCDSVGGHGRIFYRRRADNAARKAGNVADWVRRFGGNYPQMLILDADSVMTGDTIVRLVAGMEDNPDVGLIQTLPAVVNGQTLFARMQQFGGRVYGPIIAFGVAWWHGAESNYWGHNAIIRTQAFADHAGLPSLRGRKPFGGHVLSHDFVEAALMRRGGWAMHMVPYLQGSYEEGPPTLTDLLVRDRRWCQGNLQHAKVVGAKGLHWISRMHMMIGIGHYFTAPMWGMLMLVGIGIPLAGAGIDLAQGLPFSPARYWHGSSDGNAIWIFVCTMFVLLAPKLLGYIALLLNPRERRACGGAIRAALSILLETVLAALMAPVVMYLQSRGVFEVLAGKDSGWDAQVRDDGKLSWPALIRSYGGLSVFGLFMGTLAYLVSPSLAAWMAPVIVGMVVSIPVVAVTSLRRTGLALRRAGIFCIPEELDPPKVLVRASELRRAAALEPPLI.

A disordered region spans residues 1–28 (MDGTVTLSPAPTDLPPVSSLDAGQPTLP). Helical transmembrane passes span 64-84 (LIGG…SVLW), 98-118 (LFVL…AGFI), 423-443 (APMW…GAGI), 465-485 (AIWI…LGYI), 504-524 (ALSI…VMYL), 558-578 (SYGG…LVSP), and 580-600 (LAAW…VVAV).

The protein belongs to the glycosyltransferase 2 family. OpgH subfamily.

Its subcellular location is the cell inner membrane. It participates in glycan metabolism; osmoregulated periplasmic glucan (OPG) biosynthesis. Involved in the biosynthesis of osmoregulated periplasmic glucans (OPGs). The chain is Glucans biosynthesis glucosyltransferase H from Xanthomonas campestris pv. campestris (strain B100).